Here is a 311-residue protein sequence, read N- to C-terminus: Malate dehydrogenase (311 aa).

NAD(+) is bound by residues 7–13 (GAAGGIG) and aspartate 34. Substrate contacts are provided by arginine 81 and arginine 87. NAD(+) contacts are provided by residues asparagine 94 and 117 to 119 (ITN). 2 residues coordinate substrate: asparagine 119 and arginine 153. Histidine 177 (proton acceptor) is an active-site residue. NAD(+) is bound at residue methionine 227.

It belongs to the LDH/MDH superfamily. MDH type 1 family. Homodimer.

The enzyme catalyses (S)-malate + NAD(+) = oxaloacetate + NADH + H(+). Catalyzes the reversible oxidation of malate to oxaloacetate. The protein is Malate dehydrogenase of Colwellia psychrerythraea (strain 34H / ATCC BAA-681) (Vibrio psychroerythus).